The following is a 479-amino-acid chain: Ribosomal RNA small subunit methyltransferase F (479 aa).

S-adenosyl-L-methionine-binding positions include 125–131, Glu-149, Asp-176, and Asp-194; that span reads AAAPGSK. Cys-247 functions as the Nucleophile in the catalytic mechanism.

Belongs to the class I-like SAM-binding methyltransferase superfamily. RsmB/NOP family.

Its subcellular location is the cytoplasm. The catalysed reaction is cytidine(1407) in 16S rRNA + S-adenosyl-L-methionine = 5-methylcytidine(1407) in 16S rRNA + S-adenosyl-L-homocysteine + H(+). Functionally, specifically methylates the cytosine at position 1407 (m5C1407) of 16S rRNA. This chain is Ribosomal RNA small subunit methyltransferase F, found in Escherichia coli (strain SMS-3-5 / SECEC).